The chain runs to 90 residues: CRISPR-associated endonuclease Cas2 2 (90 aa).

Residue aspartate 11 participates in Mg(2+) binding.

The protein belongs to the CRISPR-associated endoribonuclease Cas2 protein family. Homodimer, forms a heterotetramer with a Cas1 homodimer. The cofactor is Mn(2+). Mg(2+) serves as cofactor.

Its activity is regulated as follows. Inhibited by EDTA and at pH 6.0. Functionally, CRISPR (clustered regularly interspaced short palindromic repeat), is an adaptive immune system that provides protection against mobile genetic elements (viruses, transposable elements and conjugative plasmids). CRISPR clusters contain sequences complementary to antecedent mobile elements and target invading nucleic acids. CRISPR clusters are transcribed and processed into CRISPR RNA (crRNA). Involved in the integration of spacer DNA into the CRISPR cassette. Functions as a dsDNA endonuclease and as a weak ssRNase. This Thermus thermophilus (strain ATCC BAA-163 / DSM 7039 / HB27) protein is CRISPR-associated endonuclease Cas2 2 (cas2b).